A 230-amino-acid chain; its full sequence is Ureidoacrylate amidohydrolase RutB (230 aa).

Asp24 functions as the Proton acceptor in the catalytic mechanism. Lys133 is an active-site residue. Cys166 (nucleophile) is an active-site residue.

This sequence belongs to the isochorismatase family. RutB subfamily.

The enzyme catalyses (Z)-3-ureidoacrylate + H2O + H(+) = (Z)-3-aminoacrylate + NH4(+) + CO2. It catalyses the reaction (Z)-3-ureidoacrylate + H2O = (Z)-3-aminoacrylate + carbamate + H(+). It carries out the reaction (Z)-2-methylureidoacrylate + H2O + H(+) = (Z)-2-methylaminoacrylate + NH4(+) + CO2. Its function is as follows. Hydrolyzes ureidoacrylate to form aminoacrylate and carbamate. The carbamate hydrolyzes spontaneously, thereby releasing one of the nitrogen atoms of the pyrimidine ring as ammonia and one of its carbon atoms as CO2. In Escherichia coli O157:H7, this protein is Ureidoacrylate amidohydrolase RutB.